The sequence spans 390 residues: Chorismate synthase (390 aa).

The NADP(+) site is built by Arg40 and Arg46. FMN-binding positions include 129-131, 249-250, Gly294, 309-313, and Arg335; these read RAS, QA, and KPIPT.

It belongs to the chorismate synthase family. In terms of assembly, homotetramer. FMNH2 serves as cofactor.

It carries out the reaction 5-O-(1-carboxyvinyl)-3-phosphoshikimate = chorismate + phosphate. It participates in metabolic intermediate biosynthesis; chorismate biosynthesis; chorismate from D-erythrose 4-phosphate and phosphoenolpyruvate: step 7/7. Functionally, catalyzes the anti-1,4-elimination of the C-3 phosphate and the C-6 proR hydrogen from 5-enolpyruvylshikimate-3-phosphate (EPSP) to yield chorismate, which is the branch point compound that serves as the starting substrate for the three terminal pathways of aromatic amino acid biosynthesis. This reaction introduces a second double bond into the aromatic ring system. The protein is Chorismate synthase of Desulforudis audaxviator (strain MP104C).